Here is a 327-residue protein sequence, read N- to C-terminus: GTPase Obg (327 aa).

One can recognise an Obg domain in the interval 1-159 (MQFIDQANII…WEVQLELKLL (159 aa)). The 168-residue stretch at 160 to 327 (AEVGIIGLPN…SLLSEVWKRI (168 aa)) folds into the OBG-type G domain. Residues 166–173 (GLPNAGKS), 191–195 (FTTLI), 213–216 (DIPG), 280–283 (NKIE), and 309–311 (SSS) each bind ATP. Mg(2+) is bound by residues Ser173 and Thr193.

The protein belongs to the TRAFAC class OBG-HflX-like GTPase superfamily. OBG GTPase family. As to quaternary structure, monomer. Requires Mg(2+) as cofactor.

The protein localises to the cytoplasm. An essential GTPase which binds GTP, GDP and possibly (p)ppGpp with moderate affinity, with high nucleotide exchange rates and a fairly low GTP hydrolysis rate. Plays a role in control of the cell cycle, stress response, ribosome biogenesis and in those bacteria that undergo differentiation, in morphogenesis control. The protein is GTPase Obg of Prochlorococcus marinus (strain AS9601).